The chain runs to 285 residues: Bifunctional protein FolD (285 aa).

Residues 165–167 and Ser-190 each bind NADP(+); that span reads GRS.

The protein belongs to the tetrahydrofolate dehydrogenase/cyclohydrolase family. Homodimer.

It carries out the reaction (6R)-5,10-methylene-5,6,7,8-tetrahydrofolate + NADP(+) = (6R)-5,10-methenyltetrahydrofolate + NADPH. The catalysed reaction is (6R)-5,10-methenyltetrahydrofolate + H2O = (6R)-10-formyltetrahydrofolate + H(+). It participates in one-carbon metabolism; tetrahydrofolate interconversion. Functionally, catalyzes the oxidation of 5,10-methylenetetrahydrofolate to 5,10-methenyltetrahydrofolate and then the hydrolysis of 5,10-methenyltetrahydrofolate to 10-formyltetrahydrofolate. This is Bifunctional protein FolD from Burkholderia orbicola (strain AU 1054).